A 128-amino-acid chain; its full sequence is S-adenosylmethionine decarboxylase proenzyme (128 aa).

The Schiff-base intermediate with substrate; via pyruvic acid role is filled by serine 63. A Pyruvic acid (Ser); by autocatalysis modification is found at serine 63. Catalysis depends on histidine 68, which acts as the Proton acceptor; for processing activity. The active-site Proton donor; for catalytic activity is cysteine 83.

It belongs to the prokaryotic AdoMetDC family. Type 1 subfamily. Heterotetramer of two alpha and two beta chains arranged as a dimer of alpha/beta heterodimers. The cofactor is pyruvate. Is synthesized initially as an inactive proenzyme. Formation of the active enzyme involves a self-maturation process in which the active site pyruvoyl group is generated from an internal serine residue via an autocatalytic post-translational modification. Two non-identical subunits are generated from the proenzyme in this reaction, and the pyruvate is formed at the N-terminus of the alpha chain, which is derived from the carboxyl end of the proenzyme. The post-translation cleavage follows an unusual pathway, termed non-hydrolytic serinolysis, in which the side chain hydroxyl group of the serine supplies its oxygen atom to form the C-terminus of the beta chain, while the remainder of the serine residue undergoes an oxidative deamination to produce ammonia and the pyruvoyl group blocking the N-terminus of the alpha chain.

The catalysed reaction is S-adenosyl-L-methionine + H(+) = S-adenosyl 3-(methylsulfanyl)propylamine + CO2. Its pathway is amine and polyamine biosynthesis; S-adenosylmethioninamine biosynthesis; S-adenosylmethioninamine from S-adenosyl-L-methionine: step 1/1. Catalyzes the decarboxylation of S-adenosylmethionine to S-adenosylmethioninamine (dcAdoMet), the propylamine donor required for the synthesis of the polyamines spermine and spermidine from the diamine putrescine. The sequence is that of S-adenosylmethionine decarboxylase proenzyme from Leptospira borgpetersenii serovar Hardjo-bovis (strain JB197).